The primary structure comprises 496 residues: Probable cytosol aminopeptidase (496 aa).

2 residues coordinate Mn(2+): K257 and D262. K269 is an active-site residue. Positions 281, 341, and 343 each coordinate Mn(2+). R345 is a catalytic residue.

The protein belongs to the peptidase M17 family. Requires Mn(2+) as cofactor.

The protein resides in the cytoplasm. It catalyses the reaction Release of an N-terminal amino acid, Xaa-|-Yaa-, in which Xaa is preferably Leu, but may be other amino acids including Pro although not Arg or Lys, and Yaa may be Pro. Amino acid amides and methyl esters are also readily hydrolyzed, but rates on arylamides are exceedingly low.. It carries out the reaction Release of an N-terminal amino acid, preferentially leucine, but not glutamic or aspartic acids.. Its function is as follows. Presumably involved in the processing and regular turnover of intracellular proteins. Catalyzes the removal of unsubstituted N-terminal amino acids from various peptides. This chain is Probable cytosol aminopeptidase, found in Synechococcus sp. (strain CC9311).